Consider the following 170-residue polypeptide: Universal stress protein MJ0531 (170 aa).

The protein belongs to the universal stress protein A family.

The polypeptide is Universal stress protein MJ0531 (Methanocaldococcus jannaschii (strain ATCC 43067 / DSM 2661 / JAL-1 / JCM 10045 / NBRC 100440) (Methanococcus jannaschii)).